The chain runs to 254 residues: Tubulin-specific chaperone B (254 aa).

Positions 182-225 (PLPLDVMGTWCGVEFPEAAGKNDGRINGVTLFGPVAPGHGSFVR) constitute a CAP-Gly domain. The tract at residues 234-254 (KDEESAEVEDVHDDVESDDEI) is disordered. Residues 237–254 (ESAEVEDVHDDVESDDEI) show a composition bias toward acidic residues.

It belongs to the TBCB family. In terms of assembly, binds to monomeric alpha-tubulin.

The protein localises to the cytoplasm. The protein resides in the cytoskeleton. In terms of biological role, acts to sequester alpha-tubulin from interaction with beta-tubulin, raising the possibility that it plays a regulatory role in the formation of the tubulin heterodimer. The protein is Tubulin-specific chaperone B (ALF1) of Saccharomyces cerevisiae (strain ATCC 204508 / S288c) (Baker's yeast).